The chain runs to 299 residues: tRNA dimethylallyltransferase (299 aa).

Position 11–18 (11–18 (GPTAVGKT)) interacts with ATP. Position 13-18 (13-18 (TAVGKT)) interacts with substrate. The tract at residues 36–39 (DSQQ) is interaction with substrate tRNA.

The protein belongs to the IPP transferase family. Monomer. Mg(2+) is required as a cofactor.

The catalysed reaction is adenosine(37) in tRNA + dimethylallyl diphosphate = N(6)-dimethylallyladenosine(37) in tRNA + diphosphate. Functionally, catalyzes the transfer of a dimethylallyl group onto the adenine at position 37 in tRNAs that read codons beginning with uridine, leading to the formation of N6-(dimethylallyl)adenosine (i(6)A). The sequence is that of tRNA dimethylallyltransferase from Streptococcus pyogenes serotype M49 (strain NZ131).